A 457-amino-acid chain; its full sequence is Siroheme synthase (457 aa).

The tract at residues 1–204 (MDHLPIFCQL…NDQKAITETT (204 aa)) is precorrin-2 dehydrogenase /sirohydrochlorin ferrochelatase. Residues 22 to 23 (DV) and 43 to 44 (LA) contribute to the NAD(+) site. S128 carries the phosphoserine modification. Positions 216 to 457 (GEVVLVGAGP…RDKLNWFSNH (242 aa)) are uroporphyrinogen-III C-methyltransferase. P225 contacts S-adenosyl-L-methionine. D248 acts as the Proton acceptor in catalysis. The active-site Proton donor is the K270. S-adenosyl-L-methionine contacts are provided by residues 301–303 (GGD), I306, 331–332 (TA), M382, and G411.

In the N-terminal section; belongs to the precorrin-2 dehydrogenase / sirohydrochlorin ferrochelatase family. This sequence in the C-terminal section; belongs to the precorrin methyltransferase family.

The catalysed reaction is uroporphyrinogen III + 2 S-adenosyl-L-methionine = precorrin-2 + 2 S-adenosyl-L-homocysteine + H(+). It carries out the reaction precorrin-2 + NAD(+) = sirohydrochlorin + NADH + 2 H(+). The enzyme catalyses siroheme + 2 H(+) = sirohydrochlorin + Fe(2+). It participates in cofactor biosynthesis; adenosylcobalamin biosynthesis; precorrin-2 from uroporphyrinogen III: step 1/1. It functions in the pathway cofactor biosynthesis; adenosylcobalamin biosynthesis; sirohydrochlorin from precorrin-2: step 1/1. Its pathway is porphyrin-containing compound metabolism; siroheme biosynthesis; precorrin-2 from uroporphyrinogen III: step 1/1. The protein operates within porphyrin-containing compound metabolism; siroheme biosynthesis; siroheme from sirohydrochlorin: step 1/1. It participates in porphyrin-containing compound metabolism; siroheme biosynthesis; sirohydrochlorin from precorrin-2: step 1/1. Multifunctional enzyme that catalyzes the SAM-dependent methylations of uroporphyrinogen III at position C-2 and C-7 to form precorrin-2 via precorrin-1. Then it catalyzes the NAD-dependent ring dehydrogenation of precorrin-2 to yield sirohydrochlorin. Finally, it catalyzes the ferrochelation of sirohydrochlorin to yield siroheme. The polypeptide is Siroheme synthase (Escherichia coli O7:K1 (strain IAI39 / ExPEC)).